The following is a 367-amino-acid chain: DNA replication and repair protein RecF (367 aa).

Position 30 to 37 (30 to 37 (GANGSGKT)) interacts with ATP.

It belongs to the RecF family.

The protein resides in the cytoplasm. Its function is as follows. The RecF protein is involved in DNA metabolism; it is required for DNA replication and normal SOS inducibility. RecF binds preferentially to single-stranded, linear DNA. It also seems to bind ATP. This Pseudomonas syringae pv. tomato (strain ATCC BAA-871 / DC3000) protein is DNA replication and repair protein RecF.